The chain runs to 85 residues: Large ribosomal subunit protein bL27 (85 aa).

Positions 1–21 are disordered; it reads MAHKKAGGSSRNGRDSEAKRL.

It belongs to the bacterial ribosomal protein bL27 family.

This Aeromonas hydrophila subsp. hydrophila (strain ATCC 7966 / DSM 30187 / BCRC 13018 / CCUG 14551 / JCM 1027 / KCTC 2358 / NCIMB 9240 / NCTC 8049) protein is Large ribosomal subunit protein bL27.